We begin with the raw amino-acid sequence, 471 residues long: 3-isopropylmalate dehydratase large subunit (471 aa).

Residues Cys347, Cys407, and Cys410 each coordinate [4Fe-4S] cluster.

It belongs to the aconitase/IPM isomerase family. LeuC type 1 subfamily. In terms of assembly, heterodimer of LeuC and LeuD. [4Fe-4S] cluster is required as a cofactor.

The enzyme catalyses (2R,3S)-3-isopropylmalate = (2S)-2-isopropylmalate. It participates in amino-acid biosynthesis; L-leucine biosynthesis; L-leucine from 3-methyl-2-oxobutanoate: step 2/4. Catalyzes the isomerization between 2-isopropylmalate and 3-isopropylmalate, via the formation of 2-isopropylmaleate. In Buchnera aphidicola subsp. Baizongia pistaciae (strain Bp), this protein is 3-isopropylmalate dehydratase large subunit.